A 602-amino-acid chain; its full sequence is MPMLRLYARVLQLLGKEAMLGWVLAGANLLLAAAQFAEPVLFGRIVDVLSGNLSTGAMAQPAQSPWPLLLAWAVFGLFTIGCGAAVALHADRLAHRQRQAILTDYFEHVLQLPLTYHTGTHSGRLMKVMLNGTDALWRLWLGFFREHFAALMSLVVLLPLSIYINWRLALLLFALCVVFTVLTTLVVRKTYAMQGEVEESYSDLSARASDALGNIALVQSFVRIDAEVQGLRFVADRLLAMQMPVLSWWALVTVITRASTTITVLAIFTVGIALHEQGLTSVGEIVMFVSFATMLIQKLEQVVGFVNSVFMEAPRLQEFVNVLDAVPAVRDRLDAIDPGRLSGLVEFDNVSFSYDGKRPAIEDLSFTALPGQTIALVGATGAGKSTAIALLHRAFDPQSGVIKIDGMDVRGLTLAGLRRNIGVVFQEALLFDRTIADNLRVGKPDATEEEMRIAASRAQALDFIERSELKFDTNAGERGRMLSGGERQRLSIARALLKDPPILILDEATSALDAVTEAKVNLALDEVMKGRTTFVIAHRLSTIRHATRILVFDNGRVIESGSFDELLARRGYFAELAHAQFMVQDSARSAMPAAQPEGIPEF.

The region spanning 21-311 (GWVLAGANLL…VVGFVNSVFM (291 aa)) is the ABC transmembrane type-1 domain. 6 helical membrane-spanning segments follow: residues 22 to 42 (WVLAGANLLLAAAQFAEPVLF), 68 to 88 (LLLAWAVFGLFTIGCGAAVAL), 146 to 166 (EHFAALMSLVVLLPLSIYINW), 167 to 187 (RLALLLFALCVVFTVLTTLVV), 238 to 258 (LLAMQMPVLSWWALVTVITRA), and 285 to 305 (IVMFVSFATMLIQKLEQVVGF). The ABC transporter domain maps to 345-579 (VEFDNVSFSY…RGYFAELAHA (235 aa)). Residue 378–385 (GATGAGKS) participates in ATP binding.

It belongs to the ABC transporter superfamily. Beta-(1--&gt;2)glucan exporter (TC 3.A.1.108.1) family. Homodimer.

It localises to the cell inner membrane. It carries out the reaction [(1-&gt;2)-beta-D-glucosyl](n)(in) + ATP + H2O = [(1-&gt;2)-beta-D-glucosyl](n)(out) + ADP + phosphate + H(+). Functionally, involved in Beta-(1--&gt;2)glucan export. Transmembrane domains (TMD) form a pore in the inner membrane and the ATP-binding domain (NBD) is responsible for energy generation. This Rhodopseudomonas palustris (strain BisA53) protein is Beta-(1--&gt;2)glucan export ATP-binding/permease protein NdvA.